The following is a 120-amino-acid chain: ATP-dependent Clp protease adapter protein ClpS (120 aa).

The protein belongs to the ClpS family. In terms of assembly, binds to the N-terminal domain of the chaperone ClpA.

Involved in the modulation of the specificity of the ClpAP-mediated ATP-dependent protein degradation. The chain is ATP-dependent Clp protease adapter protein ClpS from Pseudomonas syringae pv. syringae (strain B728a).